The chain runs to 308 residues: Bifunctional protein FolD (308 aa).

Residues 171 to 173 (GRS), S198, and I239 contribute to the NADP(+) site.

It belongs to the tetrahydrofolate dehydrogenase/cyclohydrolase family. In terms of assembly, homodimer.

The catalysed reaction is (6R)-5,10-methylene-5,6,7,8-tetrahydrofolate + NADP(+) = (6R)-5,10-methenyltetrahydrofolate + NADPH. It catalyses the reaction (6R)-5,10-methenyltetrahydrofolate + H2O = (6R)-10-formyltetrahydrofolate + H(+). The protein operates within one-carbon metabolism; tetrahydrofolate interconversion. In terms of biological role, catalyzes the oxidation of 5,10-methylenetetrahydrofolate to 5,10-methenyltetrahydrofolate and then the hydrolysis of 5,10-methenyltetrahydrofolate to 10-formyltetrahydrofolate. The protein is Bifunctional protein FolD of Borreliella burgdorferi (strain ZS7) (Borrelia burgdorferi).